We begin with the raw amino-acid sequence, 148 residues long: Small ribosomal subunit protein eS19G (148 aa).

It belongs to the eukaryotic ribosomal protein eS19 family.

Functionally, elimination of the ALEP-1 gene from all somatic cells in its fully activate state may represent an alternative way to gene regulation. This Ascaris suum (Pig roundworm) protein is Small ribosomal subunit protein eS19G (RPS19G).